The following is a 74-amino-acid chain: Chitinases 70, 30, and 20.5 kDa (74 aa).

The interval 1 to 27 is N-terminus of 70 kDa chitinase; that stretch reads XTSATATYAKTQDWGSCFEGKWTIKNT. The segment at 28 to 52 is N-terminus of 30 kDa chitinase; the sequence is AACSSYPSWVAGRSYAAGDIVYYTD. The interval 53–74 is N-terminus of 20.5 kDa chitinase; it reads XGYTDLPVSRQKMCQNGMVTNC.

The protein belongs to the glycosyl hydrolase 18 family. Chitinase class II subfamily. In terms of assembly, homodimer, but homotrimers and homotetramers could be observed for the 20.5 and 30 kDa chitinases. Post-translationally, the 70 kDa chitinase is probably the precursor protein of the 30 and 20.5 kDa chitinases.

The enzyme catalyses Random endo-hydrolysis of N-acetyl-beta-D-glucosaminide (1-&gt;4)-beta-linkages in chitin and chitodextrins.. Functionally, able to cleave chitin oligomers from N=3 to 6. This is Chitinases 70, 30, and 20.5 kDa from Streptomyces olivaceoviridis (Streptomyces corchorusii).